Reading from the N-terminus, the 630-residue chain is tRNA uridine 5-carboxymethylaminomethyl modification enzyme MnmG (630 aa).

FAD-binding positions include 14 to 19 (GAGHAG), Val126, and Ser181. An NAD(+)-binding site is contributed by 273–287 (GPRYCPSIEDKVVRF). Position 370 (Gln370) interacts with FAD.

This sequence belongs to the MnmG family. In terms of assembly, homodimer. Heterotetramer of two MnmE and two MnmG subunits. FAD serves as cofactor.

It is found in the cytoplasm. In terms of biological role, NAD-binding protein involved in the addition of a carboxymethylaminomethyl (cmnm) group at the wobble position (U34) of certain tRNAs, forming tRNA-cmnm(5)s(2)U34. The protein is tRNA uridine 5-carboxymethylaminomethyl modification enzyme MnmG of Alkaliphilus metalliredigens (strain QYMF).